The following is a 366-amino-acid chain: Fe-S cluster assembly protein DRE2 (366 aa).

The segment at A8–V167 is N-terminal SAM-like domain. Positions R100–E136 are disordered. The segment covering G108 to G118 has biased composition (low complexity). A compositionally biased stretch (gly residues) spans S119 to G128. The interval P168–M258 is linker. [2Fe-2S] cluster-binding residues include C268, C279, C282, and C284. The tract at residues C268–C284 is fe-S binding site A. Residues C329, C332, C340, and C343 each coordinate [4Fe-4S] cluster. 2 short sequence motifs (cx2C motif) span residues C329–C332 and C340–C343. The fe-S binding site B stretch occupies residues C329–C343.

It belongs to the anamorsin family. Monomer. Interacts with TAH18. Interacts with MIA40. Requires [2Fe-2S] cluster as cofactor. [4Fe-4S] cluster serves as cofactor.

It is found in the cytoplasm. The protein localises to the mitochondrion intermembrane space. Its function is as follows. Component of the cytosolic iron-sulfur (Fe-S) protein assembly (CIA) machinery required for the maturation of extramitochondrial Fe-S proteins. Part of an electron transfer chain functioning in an early step of cytosolic Fe-S biogenesis, facilitating the de novo assembly of a [4Fe-4S] cluster on the scaffold complex CFD1-NBP35. Electrons are transferred to DRE2 from NADPH via the FAD- and FMN-containing protein TAH18. TAH18-DRE2 are also required for the assembly of the diferric tyrosyl radical cofactor of ribonucleotide reductase (RNR), probably by providing electrons for reduction during radical cofactor maturation in the catalytic small subunit RNR2. The sequence is that of Fe-S cluster assembly protein DRE2 from Paracoccidioides lutzii (strain ATCC MYA-826 / Pb01) (Paracoccidioides brasiliensis).